Reading from the N-terminus, the 165-residue chain is Methylated-DNA--protein-cysteine methyltransferase (165 aa).

The Nucleophile; methyl group acceptor role is filled by cysteine 126.

Belongs to the MGMT family.

Its subcellular location is the cytoplasm. It catalyses the reaction a 6-O-methyl-2'-deoxyguanosine in DNA + L-cysteinyl-[protein] = S-methyl-L-cysteinyl-[protein] + a 2'-deoxyguanosine in DNA. The enzyme catalyses a 4-O-methyl-thymidine in DNA + L-cysteinyl-[protein] = a thymidine in DNA + S-methyl-L-cysteinyl-[protein]. Functionally, involved in the cellular defense against the biological effects of O6-methylguanine (O6-MeG) and O4-methylthymine (O4-MeT) in DNA. Repairs the methylated nucleobase in DNA by stoichiometrically transferring the methyl group to a cysteine residue in the enzyme. This is a suicide reaction: the enzyme is irreversibly inactivated. The chain is Methylated-DNA--protein-cysteine methyltransferase from Mycolicibacterium paratuberculosis (strain ATCC BAA-968 / K-10) (Mycobacterium paratuberculosis).